A 1224-amino-acid polypeptide reads, in one-letter code: Coatomer subunit alpha (1224 aa).

WD repeat units follow at residues 3 to 38 (TKFE…LWDY), 42 to 80 (TLID…VWNY), 84 to 122 (RCLF…VWNW), and 126 to 164 (TCVC…VWDI). The residue at position 173 (Ser173) is a Phosphoserine. Thr185 is modified (phosphothreonine). WD repeat units lie at residues 195 to 234 (AVVK…IWRM), 241 to 278 (EVDT…VWDM), and 282 to 319 (TGVQ…VFKL). Position 402 is a phosphoserine (Ser402). Residue Thr591 is modified to Phosphothreonine. Ser895 carries the phosphoserine modification. An Omega-N-methylarginine modification is found at Arg965. A Phosphoserine modification is found at Ser1193.

Oligomeric complex that consists of at least the alpha, beta, beta', gamma, delta, epsilon and zeta subunits. Interacts with SCYL1. Interacts with JAGN1. Interacts with TMEM41B. Interacts with SVEP1. Probably interacts with PEX11A. As to expression, uniformly expressed in a wide range of adult and fetal tissues. Xenin is found in gastric, duodenal and jejunal mucosa. Circulates in the blood. Seems to be confined to specific endocrine cells.

The protein resides in the cytoplasm. It localises to the golgi apparatus membrane. It is found in the cytoplasmic vesicle. Its subcellular location is the COPI-coated vesicle membrane. The protein localises to the secreted. In terms of biological role, the coatomer is a cytosolic protein complex that binds to dilysine motifs and reversibly associates with Golgi non-clathrin-coated vesicles, which further mediate biosynthetic protein transport from the ER, via the Golgi up to the trans Golgi network. Coatomer complex is required for budding from Golgi membranes, and is essential for the retrograde Golgi-to-ER transport of dilysine-tagged proteins. In mammals, the coatomer can only be recruited by membranes associated to ADP-ribosylation factors (ARFs), which are small GTP-binding proteins; the complex also influences the Golgi structural integrity, as well as the processing, activity, and endocytic recycling of LDL receptors. Xenin stimulates exocrine pancreatic secretion. It inhibits pentagastrin-stimulated secretion of acid, to induce exocrine pancreatic secretion and to affect small and large intestinal motility. In the gut, xenin interacts with the neurotensin receptor. The chain is Coatomer subunit alpha (COPA) from Homo sapiens (Human).